Reading from the N-terminus, the 236-residue chain is Penton protein H240R (236 aa).

Belongs to the asfivirus H240R family.

Its subcellular location is the virion. Functionally, forms the penton at the fivefold vertices of the icosahedral capsid. Together with the minor capsid proteins (p17, p49, and M1249L), forms a complicated network immediately below the outer capsid shell, stabilizing the whole capsid. This is Penton protein H240R from African swine fever virus (isolate Warthog/Namibia/Wart80/1980) (ASFV).